The chain runs to 539 residues: Protoporphyrinogen oxidase (539 aa).

FAD contacts are provided by residues Gly-18 to Gly-23, Glu-43 to Ser-44, Trp-51, Gly-70 to Thr-73, Val-300, and Pro-521 to Val-523.

It belongs to the protoporphyrinogen/coproporphyrinogen oxidase family. Protoporphyrinogen oxidase subfamily. Requires FAD as cofactor.

Its subcellular location is the mitochondrion inner membrane. The enzyme catalyses protoporphyrinogen IX + 3 O2 = protoporphyrin IX + 3 H2O2. The protein operates within porphyrin-containing compound metabolism; protoporphyrin-IX biosynthesis; protoporphyrin-IX from protoporphyrinogen-IX: step 1/1. Functionally, catalyzes the 6-electron oxidation of protoporphyrinogen-IX to form protoporphyrin-IX. The sequence is that of Protoporphyrinogen oxidase from Saccharomyces cerevisiae (strain ATCC 204508 / S288c) (Baker's yeast).